The primary structure comprises 253 residues: Triosephosphate isomerase (253 aa).

9–11 (NWK) contacts substrate. His95 (electrophile) is an active-site residue. Glu167 acts as the Proton acceptor in catalysis. Substrate contacts are provided by residues Gly173, Ser213, and 234–235 (GG). A Phosphoserine modification is found at Ser213.

It belongs to the triosephosphate isomerase family. As to quaternary structure, homodimer.

It is found in the cytoplasm. It catalyses the reaction D-glyceraldehyde 3-phosphate = dihydroxyacetone phosphate. It participates in carbohydrate biosynthesis; gluconeogenesis. Its pathway is carbohydrate degradation; glycolysis; D-glyceraldehyde 3-phosphate from glycerone phosphate: step 1/1. In terms of biological role, involved in the gluconeogenesis. Catalyzes stereospecifically the conversion of dihydroxyacetone phosphate (DHAP) to D-glyceraldehyde-3-phosphate (G3P). The chain is Triosephosphate isomerase from Bacillus velezensis (strain DSM 23117 / BGSC 10A6 / LMG 26770 / FZB42) (Bacillus amyloliquefaciens subsp. plantarum).